The primary structure comprises 130 residues: Holin-like protein CidA (130 aa).

The next 4 membrane-spanning stretches (helical) occupy residues 6 to 26, 31 to 51, 65 to 85, and 93 to 113; these read FVIK…IGTE, LHIP…LLQF, FLLK…MDVA, and ILFF…SGYI.

This sequence belongs to the CidA/LrgA family. CidA subfamily.

The protein resides in the cell membrane. Its function is as follows. Increases the activity of extracellular murein hydrolases possibly by mediating their export via hole formation. Inhibited by the antiholin-like proteins LrgAB. In an unstressed cell, the LrgAB products probably inhibit the function of the CidAB proteins. When a cell is stressed by the addition of antibiotics or by other factors in the environment, the CidAB proteins possibly oligomerize within the bacterial cell membrane, creating lesions that disrupt the proton motive force, which in turn results in loss of cell viability. These lesions are also hypothesized to regulate the subsequent cell lysis by either allowing the murein hydrolases access to the cell wall substrate and/or regulating their activity by a possible change in the cell wall pH that results from loss of membrane potential. The sequence is that of Holin-like protein CidA from Staphylococcus epidermidis (strain ATCC 35984 / DSM 28319 / BCRC 17069 / CCUG 31568 / BM 3577 / RP62A).